The sequence spans 124 residues: Small ribosomal subunit protein uS12 (124 aa).

Disordered stretches follow at residues 9-32 (RKGRRDKVAKTKTAALKGSPQRRG) and 105-124 (QGVKNRKQARSRYGAKKEKS). Basic residues predominate over residues 108 to 118 (KNRKQARSRYG).

The protein belongs to the universal ribosomal protein uS12 family. As to quaternary structure, part of the 30S ribosomal subunit. Contacts proteins S8 and S17. May interact with IF1 in the 30S initiation complex.

In terms of biological role, with S4 and S5 plays an important role in translational accuracy. Functionally, interacts with and stabilizes bases of the 16S rRNA that are involved in tRNA selection in the A site and with the mRNA backbone. Located at the interface of the 30S and 50S subunits, it traverses the body of the 30S subunit contacting proteins on the other side and probably holding the rRNA structure together. The combined cluster of proteins S8, S12 and S17 appears to hold together the shoulder and platform of the 30S subunit. This is Small ribosomal subunit protein uS12 from Nocardia farcinica (strain IFM 10152).